A 337-amino-acid polypeptide reads, in one-letter code: ATP-dependent 6-phosphofructokinase (337 aa).

G11 is a binding site for ATP. 21–25 lines the ADP pocket; sequence RAVVR. ATP contacts are provided by residues 72–73 and 102–105; these read RY and GDGS. D103 provides a ligand contact to Mg(2+). Residue 125-127 coordinates substrate; sequence TID. The Proton acceptor role is filled by D127. R154 contributes to the ADP binding site. Residues R162 and 169-171 each bind substrate; that span reads MGR. ADP contacts are provided by residues 185–187, R212, and 214–216; these read GAD and KNH. Residues E223, R245, and 251-254 each bind substrate; that span reads HILR.

This sequence belongs to the phosphofructokinase type A (PFKA) family. ATP-dependent PFK group I subfamily. Prokaryotic clade 'B1' sub-subfamily. In terms of assembly, homotetramer. Mg(2+) is required as a cofactor.

It is found in the cytoplasm. It carries out the reaction beta-D-fructose 6-phosphate + ATP = beta-D-fructose 1,6-bisphosphate + ADP + H(+). It functions in the pathway carbohydrate degradation; glycolysis; D-glyceraldehyde 3-phosphate and glycerone phosphate from D-glucose: step 3/4. With respect to regulation, allosterically activated by ADP and other diphosphonucleosides, and allosterically inhibited by phosphoenolpyruvate. In terms of biological role, catalyzes the phosphorylation of D-fructose 6-phosphate to fructose 1,6-bisphosphate by ATP, the first committing step of glycolysis. This chain is ATP-dependent 6-phosphofructokinase, found in Streptococcus equi subsp. equi (strain 4047).